Reading from the N-terminus, the 204-residue chain is Somatotropin (204 aa).

Positions 1–17 (MDRVILLLSVVSLGVSS) are cleaved as a signal peptide. Glutamine 18 carries the pyrrolidone carboxylic acid modification. Residue histidine 36 coordinates Zn(2+). A disulfide bridge links cysteine 69 with cysteine 177. Glutamate 186 lines the Zn(2+) pocket. The cysteines at positions 194 and 202 are disulfide-linked.

This sequence belongs to the somatotropin/prolactin family.

The protein resides in the secreted. Its function is as follows. Growth hormone plays an important role in growth control and is involved in the regulation of several anabolic processes. Implicated as an osmoregulatory substance important for seawater adaptation. The sequence is that of Somatotropin (gh) from Sebastes schlegelii (Korean rockfish).